Consider the following 100-residue polypeptide: Small ribosomal subunit protein uS14c (100 aa).

This sequence belongs to the universal ribosomal protein uS14 family. As to quaternary structure, part of the 30S ribosomal subunit.

The protein resides in the plastid. Its subcellular location is the chloroplast. In terms of biological role, binds 16S rRNA, required for the assembly of 30S particles. This Cucumis sativus (Cucumber) protein is Small ribosomal subunit protein uS14c.